A 391-amino-acid polypeptide reads, in one-letter code: Mannonate dehydratase (391 aa).

This sequence belongs to the mannonate dehydratase family. Fe(2+) is required as a cofactor. It depends on Mn(2+) as a cofactor.

It catalyses the reaction D-mannonate = 2-dehydro-3-deoxy-D-gluconate + H2O. Its pathway is carbohydrate metabolism; pentose and glucuronate interconversion. In terms of biological role, catalyzes the dehydration of D-mannonate. The chain is Mannonate dehydratase from Marinomonas sp. (strain MWYL1).